A 196-amino-acid chain; its full sequence is Small ribosomal subunit protein uS4C (196 aa).

Positions 87-149 (CRLDNVVYRI…HRQNEMFSNN (63 aa)) constitute an S4 RNA-binding domain.

It belongs to the universal ribosomal protein uS4 family. As to quaternary structure, part of the 30S ribosomal subunit. Contacts protein S5. The interaction surface between S4 and S5 is involved in control of translational fidelity.

In terms of biological role, one of the primary rRNA binding proteins, it binds directly to 16S rRNA where it nucleates assembly of the body of the 30S subunit. Its function is as follows. With S5 and S12 plays an important role in translational accuracy. This is Small ribosomal subunit protein uS4C (rpsD3) from Clostridium acetobutylicum (strain ATCC 824 / DSM 792 / JCM 1419 / IAM 19013 / LMG 5710 / NBRC 13948 / NRRL B-527 / VKM B-1787 / 2291 / W).